Reading from the N-terminus, the 148-residue chain is Large ribosomal subunit protein bL9 (148 aa).

The protein belongs to the bacterial ribosomal protein bL9 family.

Functionally, binds to the 23S rRNA. The protein is Large ribosomal subunit protein bL9 of Staphylococcus aureus (strain Newman).